Here is a 1041-residue protein sequence, read N- to C-terminus: Leucine-rich repeat receptor-like protein kinase TDR (1041 aa).

A signal peptide spans 1–29 (MKKKNISPSLVLHPLLLLLLPFFAFNSLA). Residues 30–652 (LKFSPQLLSL…HHKEERPKKT (623 aa)) are Extracellular-facing. Cys-69 and Cys-76 are oxidised to a cystine. Asn-78, Asn-92, and Asn-111 each carry an N-linked (GlcNAc...) asparagine glycan. LRR repeat units lie at residues 80–104 (TAQV…IRYL), 105–128 (SSLL…IFDL), 130–152 (KLTT…ISKL), 154–176 (FLKV…VSRL), 177–199 (RFLE…AYGG), 200–224 (LQRL…LGLL), 225–248 (TELQ…FALL), 250–272 (NLKY…LGNL), 273–296 (SNLE…YSNL), 297–319 (KSLK…GFST), 321–344 (KNLT…IGEL), 345–368 (PELT…LGSN), 369–392 (GKLE…LCHG), 394–416 (KLYK…LTRC), 418–439 (SLWR…GFGS), 440–464 (LRNL…FATA), 466–488 (VLQY…IWKA), 511–535 (CKSF…IGHC), 536–558 (EKLL…EIST), 559–583 (LPSI…FGSS), and 585–607 (TITT…SFAH). The segment at 186–188 (GSY) is CLE peptide binding. Residues 233 to 235 (GYN) form a CLE peptide binding region. N-linked (GlcNAc...) asparagine glycans are attached at residues Asn-258 and Asn-271. A CLE peptide binding region spans residues 303-307 (DFSSN). Residues Asn-322, Asn-332, and Asn-356 are each glycosylated (N-linked (GlcNAc...) asparagine). Residues 375-377 (DVS) are CLE peptide binding. Asn-378 is a glycosylation site (N-linked (GlcNAc...) asparagine). A disulfide bridge links Cys-390 with Cys-416. The segment at 421–423 (RFR) is CLE peptide binding. Residues Asn-430, Asn-442, Asn-471, Asn-525, and Asn-542 are each glycosylated (N-linked (GlcNAc...) asparagine). Cys-511 and Cys-535 form a disulfide bridge. Asn-590 carries an N-linked (GlcNAc...) asparagine glycan. A disulfide bond links Cys-620 and Cys-628. A helical membrane pass occupies residues 653 to 673 (AGAIVWILAAAIGVGFFVLVA). Residues 674–1041 (ATRCFQKSYG…HDVKCQRIGV (368 aa)) are Cytoplasmic-facing. Thr-710 carries the phosphothreonine modification. In terms of domain architecture, Protein kinase spans 719 to 1001 (SKTDNILGMG…DVLLILQEAK (283 aa)). ATP contacts are provided by residues 725–733 (LGMGSTGTV) and Lys-747. Phosphotyrosine is present on residues Tyr-798 and Tyr-839. Asp-852 acts as the Proton acceptor in catalysis. Ser-884 bears the Phosphoserine mark. 2 positions are modified to phosphotyrosine: Tyr-892 and Tyr-899. The residue at position 900 (Thr-900) is a Phosphothreonine.

Belongs to the protein kinase superfamily. Ser/Thr protein kinase family. As to quaternary structure, interacts specifically with the mature peptides CLE41p and CLE44p, especially in the presence of SERK2. Interacts with LURE1.2. Widely expressed along the vascular strands. In roots and hypocotyls, confined to procambial cells.

The protein resides in the cell membrane. It catalyses the reaction L-seryl-[protein] + ATP = O-phospho-L-seryl-[protein] + ADP + H(+). The catalysed reaction is L-threonyl-[protein] + ATP = O-phospho-L-threonyl-[protein] + ADP + H(+). Its function is as follows. Acts with CLE41p and CLE44p peptides as a ligand-receptor pair in a signal transduction pathway involved in the regulation of procambium maintenance and polarity during vascular-tissue development. Mediates repression of tracheary element differentiation and the promotion of procambial cells formation and polar division adjacent to phloem cells in the veins. This chain is Leucine-rich repeat receptor-like protein kinase TDR, found in Arabidopsis thaliana (Mouse-ear cress).